A 1357-amino-acid polypeptide reads, in one-letter code: MAYSYTEKKRIRKDFSKLPDVMDVPYLLAIQLDSYREFLQAGATKDQFRDVGLHAAFKSVFPIISYSGNAALEYVGYRLGEPAFDVKECVLRGVTYAVPLRVKVRLIIFDKESSNKAIKDIKEQEVYMGEIPLMTENGTFVINGTERVIVSQLHRSPGVFFDHDRGKTHSSGKLLYSARIIPYRGSWLDFEFDPKDCVFVRIDRRRKLPASVLLRALGYTTEQVLDAFYTTNVFHVRGENLSLELVPQRLRGEIAVLDILDDKGKVIVEQGRRITARHINQLEKAGIKELEVPLDYVLGRTTAKVIVHPATGEIIAECNTELNTEILAKIAKAQVVRIETLYTNDIDCGPFVSDTLKIDSTSNQLEALVEIYRMMRPGEPPTKDAAETLFNNLFFSPERYDLSAVGRMKFNRRIGRTEIEGSGVLCKEDIVAVLKTLVDIRNGKGIVDDIDHLGNRRVRCVGEMAENQFRVGLVRVERAVKERLSMAESEGLMPQDLINAKPVAAAVKEFFGSSQLSQFMGQNNPLSEITHKRRVSALGPGGLTRERAGFEVRDVHPTHYGRVCPIETPEGPNIGLINSLAAYARTNQYGFLESPYRVVKEGLVTEEIVFLSAIEEADHVIAQASAAMNDKQELIDELVAVRHLNEFTVKAPADVTLMDVSPKQVVSVAASLIPFLEHDDANRALMGSNMQRQAVPTLRADKPLVGTGMERNVARDSGVCVVARRGGVIDSVDASRIVVRVADDEVETGEAGVDIYNLTKYTRSNQNTCINQRPLVSKGDRVQRSDIMADGPSTDMGELALGQNMRIAFMAWNGFNFEDSICLSERVVQEDRFTTIHIQELTCVARDTKLGPEEITADIPNVGEAALNKLDEAGIVYVGAEVGAGDILVGKVTPKGETQLTPEEKLLRAIFGEKASDVKDTSLRVPTGTKGTVIDVQVFTRDGVERDARALSIEKSQLDEIRKDLNEEFRIVEGATFERLRSALVGRVAEGGAGLKKGQEITNEVLDGLEHGQWFKLRMAEDALNEQLEKAQAYIVDRRRLLDDKFEDKKRKLQQGDDLAPGVLKIVKVYLAIRRRIQPGDKMAGRHGNKGVVSVIMPVEDMPHDANGTPVDIVLNPLGVPSRMNVGQILETHLGLAAKGLGEKINRMLEEQRKVAELRKFLNEIYNEIGGRQESLEDLTDNEILDLAKNLRNGVPMATPVFDGAKESEIKAMLKLADMPESGQMQLFDGRTGNKFERAVTVGYMYMLKLNHLVDDKMHARSTGSYSLVTQQPLGGKAQFGGQRFGEMEVWALEAYCAAYTLQEMLTVKSDDVNGRTKMYKNIVDGDHRMEPGMPESFNVLIKEIRSLGIDIDLETE.

This sequence belongs to the RNA polymerase beta chain family. As to quaternary structure, the RNAP catalytic core consists of 2 alpha, 1 beta, 1 beta' and 1 omega subunit. When a sigma factor is associated with the core the holoenzyme is formed, which can initiate transcription.

It catalyses the reaction RNA(n) + a ribonucleoside 5'-triphosphate = RNA(n+1) + diphosphate. In terms of biological role, DNA-dependent RNA polymerase catalyzes the transcription of DNA into RNA using the four ribonucleoside triphosphates as substrates. The polypeptide is DNA-directed RNA polymerase subunit beta (Pseudomonas syringae pv. syringae (strain B728a)).